The chain runs to 346 residues: Olfactory receptor 13D1 (346 aa).

Topologically, residues 1 to 57 (MYRFTDFDVSNISIYLNHVLFYTTQQAGDLEHMETRNYSAMTEFFLVGLSQYPELQL) are extracellular. The N-linked (GlcNAc...) asparagine glycan is linked to Asn-37. The helical transmembrane segment at 58 to 78 (FLFLLCLIMYMIILLGNSLLI) threads the bilayer. At 79-86 (IITILDSR) the chain is on the cytoplasmic side. The helical transmembrane segment at 87–107 (LHTPMYFFLGNLSFLDICYTS) threads the bilayer. The Extracellular segment spans residues 108 to 131 (SSIPPMLIIFMSERKSISFIGCAL). Cys-129 and Cys-221 are disulfide-bonded. The chain crosses the membrane as a helical span at residues 132–152 (QMVVSLGLGSTECVLLAVMAY). The Cytoplasmic portion of the chain corresponds to 153–171 (DHYVAICNPLRYSIIMNGV). A helical membrane pass occupies residues 172 to 192 (LYVQMAAWSWIIGCLTSLLQT). Over 193–229 (VLTMMLPFCGNNVIDHITCEILALLKLVCSDITINVL) the chain is Extracellular. The chain crosses the membrane as a helical span at residues 230–249 (IMTVTNIVSLVILLLLIFIS). The Cytoplasmic segment spans residues 250-269 (YVFILSSILRINCAEGRKKA). Residues 270 to 290 (FSTCSAHSIVVILFYGSALFM) form a helical membrane-spanning segment. Topologically, residues 291–303 (YMKPKSKNTNTSD) are extracellular. Asn-300 carries an N-linked (GlcNAc...) asparagine glycan. A helical transmembrane segment spans residues 304–324 (EIIGLSYGVVSPMLNPIIYSL). Residues 325–346 (RNKEVKEAVKKVLSRHLHLLKM) are Cytoplasmic-facing.

The protein belongs to the G-protein coupled receptor 1 family.

The protein resides in the cell membrane. Odorant receptor. The protein is Olfactory receptor 13D1 (OR13D1) of Homo sapiens (Human).